Here is a 297-residue protein sequence, read N- to C-terminus: Averufin oxidase stcO (297 aa).

A helical transmembrane segment spans residues 277–297; that stretch reads VVVLGVCILLLLGGLLYSIKA.

Belongs to the avfA family.

It localises to the membrane. Its pathway is mycotoxin biosynthesis; sterigmatocystin biosynthesis. Averufin oxidase; part of the gene cluster that mediates the biosynthesis of sterigmatocystin (ST), a polyketide-derived furanocoumarin which is part of the most toxic and carcinogenic compounds among the known mycotoxins. The first step in the biosynthesis of sterigmatocystin is the production of hexanoate by the fatty acid synthase (FAS) units stcJ and stcK. The polyketide backbone is assembled by the non-reducing polyketide synthase stcA by condensation of the starter hexanoyl-CoA and 7 malonyl-CoA extender units followed by cyclization and release of norsolorinic acid. Norsolorinic acid is the first stable intermediate in the biosynthesis of sterigmatocystin and is converted into averantin (AVN) by the ketoreductase stcE which reduces the hexanoate ketone to an alcohol. Averantin is then oxidized into 5'-hydroxyaverantin (HAVN) by the cytochrome P450 monooxygenase stcF. 5'-hydroxyaverantin is further converted to 5'-oxyaverantin (OAVN) by the 5'-hydroxyaverantin dehydrogenase stcG. The next step is the conversion of OAVN into averufin (AVF) which is catalyzed by a yet to be identified enzyme. The cytochrome P450 monooxygenase stcB and the flavin-binding monooxygenase stcW are both required for the conversion of averufin to 1-hydroxyversicolorone. The esterase stcI probably catalyzes the formation of versiconal hemiacetal acetate from 1-hydroxyversicolorone. The oxydoreductase stcN then probably catalyzes the biosynthetic step from versiconal to versicolorin B (VERB). The next step is performed by the versicolorin B desaturase stcL to produce versicolorin A (VERA). The ketoreductase stcU and the cytochrome P450 monooxygenase stcS are involved in the conversion of versicolorin A to demethylsterigmatocystin. The Baeyer-Villiger oxidas stcQ and the reductase stcR might be involved in the biosynthetic step from versicolorin A to demethylsterigmatocystin. The final step in the biosynthesis of sterigmatocystin is the methylation of demethylsterigmatocystin catalyzed by the methyltransferase stcP. The polypeptide is Averufin oxidase stcO (Emericella nidulans (strain FGSC A4 / ATCC 38163 / CBS 112.46 / NRRL 194 / M139) (Aspergillus nidulans)).